A 245-amino-acid polypeptide reads, in one-letter code: 1-(5-phosphoribosyl)-5-[(5-phosphoribosylamino)methylideneamino] imidazole-4-carboxamide isomerase (245 aa).

Asp7 acts as the Proton acceptor in catalysis. Asp129 serves as the catalytic Proton donor.

Belongs to the HisA/HisF family.

It localises to the cytoplasm. The enzyme catalyses 1-(5-phospho-beta-D-ribosyl)-5-[(5-phospho-beta-D-ribosylamino)methylideneamino]imidazole-4-carboxamide = 5-[(5-phospho-1-deoxy-D-ribulos-1-ylimino)methylamino]-1-(5-phospho-beta-D-ribosyl)imidazole-4-carboxamide. It participates in amino-acid biosynthesis; L-histidine biosynthesis; L-histidine from 5-phospho-alpha-D-ribose 1-diphosphate: step 4/9. The protein is 1-(5-phosphoribosyl)-5-[(5-phosphoribosylamino)methylideneamino] imidazole-4-carboxamide isomerase of Shewanella oneidensis (strain ATCC 700550 / JCM 31522 / CIP 106686 / LMG 19005 / NCIMB 14063 / MR-1).